Consider the following 115-residue polypeptide: Anamorsin homolog 2 (115 aa).

The disordered stretch occupies residues 30–115 (VKEATKGEDC…KVKLNLTDDI (86 aa)). Residues Cys-39, Cys-46, Cys-49, and Cys-51 each contribute to the [2Fe-2S] cluster site. Residues 39-51 (CTTRRRACKNCTC) are fe-S binding site A. Residues Cys-77, Cys-80, Cys-88, and Cys-91 each contribute to the [4Fe-4S] cluster site. 2 consecutive short sequence motifs (cx2C motif) follow at residues 77 to 80 (CGNC) and 88 to 91 (CATC). Residues 77-91 (CGNCAKGDAFRCATC) are fe-S binding site B.

This sequence belongs to the anamorsin family. Monomer. Requires [2Fe-2S] cluster as cofactor. It depends on [4Fe-4S] cluster as a cofactor.

It localises to the cytoplasm. The protein localises to the mitochondrion intermembrane space. Functionally, component of the cytosolic iron-sulfur (Fe-S) protein assembly (CIA) machinery. Required for the maturation of extramitochondrial Fe-S proteins. Part of an electron transfer chain functioning in an early step of cytosolic Fe-S biogenesis, facilitating the de novo assembly of a [4Fe-4S] cluster on the cytosolic Fe-S scaffold complex. Electrons are transferred from NADPH via a FAD- and FMN-containing diflavin oxidoreductase. Together with the diflavin oxidoreductase, also required for the assembly of the diferric tyrosyl radical cofactor of ribonucleotide reductase (RNR), probably by providing electrons for reduction during radical cofactor maturation in the catalytic small subunit. The polypeptide is Anamorsin homolog 2 (Trypanosoma cruzi (strain CL Brener)).